The chain runs to 157 residues: SsrA-binding protein (157 aa).

Positions 135-151 are enriched in basic and acidic residues; that stretch reads DKRETEKKRDWSREKGR. The tract at residues 135 to 157 is disordered; that stretch reads DKRETEKKRDWSREKGRLLRARG.

It belongs to the SmpB family.

The protein resides in the cytoplasm. Required for rescue of stalled ribosomes mediated by trans-translation. Binds to transfer-messenger RNA (tmRNA), required for stable association of tmRNA with ribosomes. tmRNA and SmpB together mimic tRNA shape, replacing the anticodon stem-loop with SmpB. tmRNA is encoded by the ssrA gene; the 2 termini fold to resemble tRNA(Ala) and it encodes a 'tag peptide', a short internal open reading frame. During trans-translation Ala-aminoacylated tmRNA acts like a tRNA, entering the A-site of stalled ribosomes, displacing the stalled mRNA. The ribosome then switches to translate the ORF on the tmRNA; the nascent peptide is terminated with the 'tag peptide' encoded by the tmRNA and targeted for degradation. The ribosome is freed to recommence translation, which seems to be the essential function of trans-translation. The chain is SsrA-binding protein from Rhodopseudomonas palustris (strain BisB5).